A 1083-amino-acid polypeptide reads, in one-letter code: Error-prone DNA polymerase (1083 aa).

The protein belongs to the DNA polymerase type-C family. DnaE2 subfamily.

The protein localises to the cytoplasm. It catalyses the reaction DNA(n) + a 2'-deoxyribonucleoside 5'-triphosphate = DNA(n+1) + diphosphate. DNA polymerase involved in damage-induced mutagenesis and translesion synthesis (TLS). It is not the major replicative DNA polymerase. The chain is Error-prone DNA polymerase from Xanthomonas oryzae pv. oryzae (strain PXO99A).